The primary structure comprises 373 residues: Valienol-1-phosphate guanylyltransferase (373 aa).

Substrate contacts are provided by residues Gly-177 and 192-193 (EK).

It belongs to the bacterial/plant glucose-1-phosphate adenylyltransferase family. Mg(2+) serves as cofactor.

It catalyses the reaction valienol 1-phosphate + GTP + H(+) = GDP-valienol + diphosphate. In terms of biological role, involved in the biosynthesis of the antifungal agent validamycin A. Catalyzes the conversion of valienol 1-phosphate to GDP-valienol and less effectively to ADP-valienol or other NDP derivatives. The sequence is that of Valienol-1-phosphate guanylyltransferase from Streptomyces hygroscopicus subsp. limoneus.